A 314-amino-acid polypeptide reads, in one-letter code: 2,3-dihydroxyphenylpropionate/2,3-dihydroxicinnamic acid 1,2-dioxygenase (314 aa).

The active-site Proton donor is His-115. His-179 serves as the catalytic Proton acceptor.

This sequence belongs to the LigB/MhpB extradiol dioxygenase family. As to quaternary structure, homotetramer. Requires Fe(2+) as cofactor.

The enzyme catalyses 3-(2,3-dihydroxyphenyl)propanoate + O2 = (2Z,4E)-2-hydroxy-6-oxonona-2,4-dienedioate + H(+). It carries out the reaction (2E)-3-(2,3-dihydroxyphenyl)prop-2-enoate + O2 = (2Z,4E,7E)-2-hydroxy-6-oxonona-2,4,7-trienedioate + H(+). It participates in aromatic compound metabolism; 3-phenylpropanoate degradation. Catalyzes the non-heme iron(II)-dependent oxidative cleavage of 2,3-dihydroxyphenylpropionic acid and 2,3-dihydroxicinnamic acid into 2-hydroxy-6-ketononadienedioate and 2-hydroxy-6-ketononatrienedioate, respectively. This chain is 2,3-dihydroxyphenylpropionate/2,3-dihydroxicinnamic acid 1,2-dioxygenase, found in Escherichia coli O139:H28 (strain E24377A / ETEC).